A 291-amino-acid polypeptide reads, in one-letter code: 33 kDa chaperonin (291 aa).

2 disulfides stabilise this stretch: Cys-236/Cys-238 and Cys-269/Cys-272.

It belongs to the HSP33 family. Under oxidizing conditions two disulfide bonds are formed involving the reactive cysteines. Under reducing conditions zinc is bound to the reactive cysteines and the protein is inactive.

It is found in the cytoplasm. Functionally, redox regulated molecular chaperone. Protects both thermally unfolding and oxidatively damaged proteins from irreversible aggregation. Plays an important role in the bacterial defense system toward oxidative stress. The protein is 33 kDa chaperonin of Lactobacillus johnsonii (strain CNCM I-12250 / La1 / NCC 533).